Here is a 343-residue protein sequence, read N- to C-terminus: Glycogen biosynthesis protein GlgD (343 aa).

The protein belongs to the bacterial/plant glucose-1-phosphate adenylyltransferase family.

In terms of biological role, required for the synthesis of glycogen. The sequence is that of Glycogen biosynthesis protein GlgD (glgD) from Geobacillus stearothermophilus (Bacillus stearothermophilus).